A 182-amino-acid chain; its full sequence is Putative lipoprotein LpqE (182 aa).

Positions 1–29 (MNRCNIRLRLAGMTTWVASIALLAAALSG) are cleaved as a signal peptide. Cys-30 carries N-palmitoyl cysteine lipidation. A lipid anchor (S-diacylglycerol cysteine) is attached at Cys-30.

The protein localises to the cell membrane. The sequence is that of Putative lipoprotein LpqE (lpqE) from Mycobacterium bovis (strain ATCC BAA-935 / AF2122/97).